Reading from the N-terminus, the 171-residue chain is Shikimate kinase (171 aa).

Residue 14–19 (GAGKST) coordinates ATP. S18 serves as a coordination point for Mg(2+). Substrate is bound by residues D36, R60, and G82. R120 is an ATP binding site. Residue R139 participates in substrate binding. Q156 serves as a coordination point for ATP.

Belongs to the shikimate kinase family. Monomer. Mg(2+) is required as a cofactor.

The protein localises to the cytoplasm. The catalysed reaction is shikimate + ATP = 3-phosphoshikimate + ADP + H(+). The protein operates within metabolic intermediate biosynthesis; chorismate biosynthesis; chorismate from D-erythrose 4-phosphate and phosphoenolpyruvate: step 5/7. Functionally, catalyzes the specific phosphorylation of the 3-hydroxyl group of shikimic acid using ATP as a cosubstrate. In Psychromonas ingrahamii (strain DSM 17664 / CCUG 51855 / 37), this protein is Shikimate kinase.